Consider the following 701-residue polypeptide: Arachidonate 12-lipoxygenase, 12R-type (701 aa).

The region spanning 2-119 (ATYKVKVATG…TLSLREATGK (118 aa)) is the PLAT domain. Residues 120-701 (TTADDTLPIL…PVLIENSISI (582 aa)) form the Lipoxygenase domain. Fe cation-binding residues include histidine 398, histidine 403, histidine 578, asparagine 582, and isoleucine 701.

This sequence belongs to the lipoxygenase family. It depends on Fe cation as a cofactor.

The protein resides in the cytoplasm. It localises to the perinuclear region. The enzyme catalyses (5Z,8Z,11Z,14Z)-eicosatetraenoate + O2 = (12R)-hydroperoxy-(5Z,8Z,10E,14Z)-eicosatetraenoate. The catalysed reaction is N-[omega-(9Z,12Z)-octadecadienoyloxy]acyl-beta-D-glucosyl-(1&lt;-&gt;1)-octadecasphing-4E-enine + O2 = N-[omega-(9R)-hydroperoxy-(10E,12Z)-octadecadienoyloxy]acyl-beta-D-glucosyl-(1&lt;-&gt;1)-octadecasphing-4E-enine. It carries out the reaction a N-[omega-(9Z,12Z)-octadecadienoyloxy]-acylsphin-4E-enine + O2 = a N-[omega-(9R)-hydroperoxy-(10E,12Z)-octadecadienoyloxy]-acylsphin-4E-enine. It catalyses the reaction (6Z,9Z,12Z)-octadecatrienoate + O2 = 10-hydroperoxy-(6Z,8E,12Z)-octadecatrienoate. The enzyme catalyses (4Z,7Z,10Z,13Z,16Z,19Z)-docosahexaenoate + O2 = 14-hydroperoxy-(4Z,7Z,10Z,12E,16Z,19Z)-docosahexaenoate. The catalysed reaction is (8Z,11Z,14Z)-eicosatrienoate + O2 = (8Z,10E,14Z)-12-hydroperoxyeicosatrienoate. It carries out the reaction (5Z,8Z,11Z,14Z,17Z)-eicosapentaenoate + O2 = (5Z,7Z,8Z,10E,14Z,17Z)-12-hydroperoxyeicosapentaenoate. It catalyses the reaction (6Z,9Z,12Z)-octadecatrienoate + O2 = 10R-hydroperoxy-(6Z,8E,12Z)-octadecatrienoate. The enzyme catalyses 1-O-methyl-(5Z,8Z,11Z,14Z)-eicosatetraenoate + O2 = 1-O-methyl (5Z,8Z,10E,12R,14Z)-hydroperoxyiecosatetraenoate. The catalysed reaction is 1-O-methyl-(5Z,8Z,11Z,14Z)-eicosatetraenoate + O2 = 1-O-methyl-8-hydroperoxy-(5Z,9E,11Z,14Z)-eicosatetraenoate. It carries out the reaction 1-O-methyl-(5Z,8Z,11Z,14Z)-eicosatetraenoate + O2 = 1-O-methyl-(8R)-hydroperoxy-(5Z,9E,11Z,14Z)-eicosatrienoate. It catalyses the reaction 1-O-methyl-(9Z,12Z)-octadecadienoate + O2 = 1-O-methyl-(9R)-hydroperoxy-(10E,12Z)-octadecadienoate. The enzyme catalyses 1-O-methyl-20-hydroxy-(5Z,8Z,11Z,14Z)-eicosatetraenoate + O2 = 1-O-methyl-8-hydroperoxy-20-hydroxy-(5Z,9E,11Z,14Z)-eicosatetraenoate. The catalysed reaction is 1-O-methyl-20-hydroxy-(5Z,8Z,11Z,14Z)-eicosatetraenoate + O2 = 1-O-methyl-12-hydroperoxy-20-hydroxy-(5Z,8Z,10E,14Z)-eicosatetraenoate. It carries out the reaction 1-O-methyl-20-hydroxy-(5Z,8Z,11Z,14Z)-eicosatetraenoate + O2 = 1-O-methyl-9-hydroperoxy-20-hydroxy-(5Z,7E,11Z,14Z)-eicosatetraenoate. It catalyses the reaction 1-O-methyl-(9Z,12Z)-octadecadienoate + O2 = 1-O-methyl-(13S)-hydroperoxy-(9Z,11E)-octadecadienoate. Its pathway is lipid metabolism; hydroperoxy eicosatetraenoic acid biosynthesis. It participates in lipid metabolism; sphingolipid metabolism. With respect to regulation, increased by calcium. Its function is as follows. Catalyzes the regio and stereo-specific incorporation of a single molecule of dioxygen into free and esterified polyunsaturated fatty acids generating lipid hydroperoxides that can be further reduced to the corresponding hydroxy species. In the skin, acts upstream of ALOXE3 on the lineolate moiety of esterified omega-hydroxyacyl-sphingosine (EOS) ceramides to produce an epoxy-ketone derivative, a crucial step in the conjugation of omega-hydroxyceramide to membrane proteins. Therefore plays a crucial role in the synthesis of corneocytes lipid envelope and the establishment of the skin barrier to water loss. May also play a role in the regulation of the expression of airway mucins. This Rattus norvegicus (Rat) protein is Arachidonate 12-lipoxygenase, 12R-type.